A 423-amino-acid chain; its full sequence is Large ribosomal subunit protein mL37 (423 aa).

The transit peptide at 1–29 (MALASGPARRVLARPWGLGLEGCGVPRRG) directs the protein to the mitochondrion.

Belongs to the mitochondrion-specific ribosomal protein mL37 family. Component of the mitochondrial ribosome large subunit (39S) which comprises a 16S rRNA and about 50 distinct proteins.

Its subcellular location is the mitochondrion. The protein is Large ribosomal subunit protein mL37 (MRPL37) of Bos taurus (Bovine).